Consider the following 349-residue polypeptide: MRVADFHFELPESLIARHPLAERRASRLLVLDGVTGDLQHRRFADLLDHLRPGDLMVFNNTRVIPARLFGWKASGGKLEILVERVLDDERVLAHVRASKSPKAGSRILIEGGGEAQMLARHDALFELRFDQRVLPLLERVGHMPLPPYIDRPDEAADRERYQTVYAARAGAVAAPTAGLHFDEALLAAIGEKDVATAFVTLHVGAGTFQPVRVERIEDHHMHREWLEVGQEVVDAVAACRARGGRVVAVGTTSVRSLESAARDGVLRPFSGDTDIFIYPGRPFHVVDALVTNFHLPESTLLMLVSAFAGYPETMAAYAAAVAQGYRFFSYGDAMFITRNPAPRAPEETP.

Belongs to the QueA family. In terms of assembly, monomer.

It localises to the cytoplasm. It catalyses the reaction 7-aminomethyl-7-carbaguanosine(34) in tRNA + S-adenosyl-L-methionine = epoxyqueuosine(34) in tRNA + adenine + L-methionine + 2 H(+). It participates in tRNA modification; tRNA-queuosine biosynthesis. Its function is as follows. Transfers and isomerizes the ribose moiety from AdoMet to the 7-aminomethyl group of 7-deazaguanine (preQ1-tRNA) to give epoxyqueuosine (oQ-tRNA). The chain is S-adenosylmethionine:tRNA ribosyltransferase-isomerase from Azotobacter vinelandii (strain DJ / ATCC BAA-1303).